Consider the following 500-residue polypeptide: UDP-N-acetylmuramoyl-L-alanyl-D-glutamate--2,6-diaminopimelate ligase (500 aa).

Ser32 lines the UDP-N-acetyl-alpha-D-muramoyl-L-alanyl-D-glutamate pocket. 117–123 (GTNGKTT) contacts ATP. Residues 159–160 (TT), Ser186, Gln192, and Arg194 contribute to the UDP-N-acetyl-alpha-D-muramoyl-L-alanyl-D-glutamate site. Lys226 carries the post-translational modification N6-carboxylysine. Meso-2,6-diaminopimelate is bound by residues Arg395, 419 to 422 (DNPR), Gly470, and Glu474. The Meso-diaminopimelate recognition motif signature appears at 419 to 422 (DNPR).

The protein belongs to the MurCDEF family. MurE subfamily. Requires Mg(2+) as cofactor. In terms of processing, carboxylation is probably crucial for Mg(2+) binding and, consequently, for the gamma-phosphate positioning of ATP.

It localises to the cytoplasm. The enzyme catalyses UDP-N-acetyl-alpha-D-muramoyl-L-alanyl-D-glutamate + meso-2,6-diaminopimelate + ATP = UDP-N-acetyl-alpha-D-muramoyl-L-alanyl-gamma-D-glutamyl-meso-2,6-diaminopimelate + ADP + phosphate + H(+). Its pathway is cell wall biogenesis; peptidoglycan biosynthesis. In terms of biological role, catalyzes the addition of meso-diaminopimelic acid to the nucleotide precursor UDP-N-acetylmuramoyl-L-alanyl-D-glutamate (UMAG) in the biosynthesis of bacterial cell-wall peptidoglycan. The sequence is that of UDP-N-acetylmuramoyl-L-alanyl-D-glutamate--2,6-diaminopimelate ligase from Parasynechococcus marenigrum (strain WH8102).